The sequence spans 296 residues: tRNA dimethylallyltransferase (296 aa).

Residue 9–16 (GPTAVGKT) coordinates ATP. 11–16 (TAVGKT) lines the substrate pocket. Positions 34-37 (DSRQ) are interaction with substrate tRNA.

It belongs to the IPP transferase family. In terms of assembly, monomer. Requires Mg(2+) as cofactor.

It carries out the reaction adenosine(37) in tRNA + dimethylallyl diphosphate = N(6)-dimethylallyladenosine(37) in tRNA + diphosphate. Catalyzes the transfer of a dimethylallyl group onto the adenine at position 37 in tRNAs that read codons beginning with uridine, leading to the formation of N6-(dimethylallyl)adenosine (i(6)A). The chain is tRNA dimethylallyltransferase from Chloroflexus aggregans (strain MD-66 / DSM 9485).